A 319-amino-acid chain; its full sequence is tRNA N6-adenosine threonylcarbamoyltransferase (319 aa).

Residues histidine 110 and histidine 114 each coordinate Fe cation. Substrate contacts are provided by residues valine 132–glycine 136, aspartate 165, glycine 178, aspartate 182, and asparagine 271. Aspartate 300 is a Fe cation binding site.

The protein belongs to the KAE1 / TsaD family. Fe(2+) serves as cofactor.

It localises to the cytoplasm. The enzyme catalyses L-threonylcarbamoyladenylate + adenosine(37) in tRNA = N(6)-L-threonylcarbamoyladenosine(37) in tRNA + AMP + H(+). In terms of biological role, required for the formation of a threonylcarbamoyl group on adenosine at position 37 (t(6)A37) in tRNAs that read codons beginning with adenine. Is involved in the transfer of the threonylcarbamoyl moiety of threonylcarbamoyl-AMP (TC-AMP) to the N6 group of A37, together with TsaE and TsaB. TsaD likely plays a direct catalytic role in this reaction. This chain is tRNA N6-adenosine threonylcarbamoyltransferase, found in Mycoplasma capricolum subsp. capricolum (strain California kid / ATCC 27343 / NCTC 10154).